The following is a 93-amino-acid chain: Alpha-defensin 21 (93 aa).

The signal sequence occupies residues 1 to 19 (MKTLVLLSALILLAYQVQT). Positions 20 to 58 (DPIQNTDEETNTEEQPGEDDQAVSVSFGGQEGSALHEKL) are excised as a propeptide. Positions 22–43 (IQNTDEETNTEEQPGEDDQAVS) are disordered. Acidic residues predominate over residues 25-40 (TDEETNTEEQPGEDDQ). 3 disulfides stabilise this stretch: Cys-64–Cys-89, Cys-66–Cys-81, and Cys-71–Cys-88.

It belongs to the alpha-defensin family.

The protein localises to the secreted. In terms of biological role, may have microbicidal activities. This is Alpha-defensin 21 (Defa21) from Mus musculus (Mouse).